The chain runs to 533 residues: Calcium/calmodulin-dependent protein kinase type II subunit delta (533 aa).

An N-acetylalanine modification is found at Ala2. In terms of domain architecture, Protein kinase spans 14 to 272; that stretch reads YQLFEELGKG…ASEALKHPWI (259 aa). Residues 20 to 28 and Lys43 contribute to the ATP site; that span reads LGKGAFSVV. The active-site Proton acceptor is the Asp136. The segment at 283-292 is autoinhibitory domain; it reads HRQETVDCLK. Phosphothreonine; by autocatalysis is present on Thr287. The tract at residues 291 to 301 is calmodulin-binding; the sequence is LKKFNARRKLK. Phosphothreonine; by autocatalysis occurs at positions 306 and 307. The residue at position 315 (Ser315) is a Phosphoserine. An N6-acetyllysine modification is found at Lys318. 2 positions are modified to phosphoserine: Ser319 and Ser364. A disordered region spans residues 337–375; the sequence is TSPKENIPTPALEPQTTVIHNPDGNKESTESSNTTIEDE. A Phosphothreonine modification is found at Thr365. At Ser367 the chain carries Phosphoserine. Phosphothreonine occurs at positions 370 and 371. A phosphoserine mark is found at Ser438, Ser524, and Ser528.

This sequence belongs to the protein kinase superfamily. CAMK Ser/Thr protein kinase family. CaMK subfamily. CAMK2 is composed of 4 different chains: alpha (CAMK2A), beta (CAMK2B), gamma (CAMK2G), and delta (CAMK2D). The different isoforms assemble into homo- or heteromultimeric holoenzymes composed of 12 subunits with two hexameric rings stacked one on top of the other. Interacts with RRAD and CACNB2. Autophosphorylation of Thr-287 following activation by Ca(2+)/calmodulin. Phosphorylation of Thr-287 locks the kinase into an activated state. Expressed in liver.

The protein resides in the cell membrane. Its subcellular location is the sarcolemma. It localises to the sarcoplasmic reticulum membrane. The catalysed reaction is L-seryl-[protein] + ATP = O-phospho-L-seryl-[protein] + ADP + H(+). The enzyme catalyses L-threonyl-[protein] + ATP = O-phospho-L-threonyl-[protein] + ADP + H(+). With respect to regulation, activated by Ca(2+)/calmodulin. Binding of calmodulin results in conformational change that relieves intrasteric autoinhibition and allows autophosphorylation of Thr-287 which turns the kinase in a constitutively active form and confers to the kinase a Ca(2+)-independent activity. Calcium/calmodulin-dependent protein kinase involved in the regulation of Ca(2+) homeostatis and excitation-contraction coupling (ECC) in heart by targeting ion channels, transporters and accessory proteins involved in Ca(2+) influx into the myocyte, Ca(2+) release from the sarcoplasmic reticulum (SR), SR Ca(2+) uptake and Na(+) and K(+) channel transport. Targets also transcription factors and signaling molecules to regulate heart function. In its activated form, is involved in the pathogenesis of dilated cardiomyopathy and heart failure. Contributes to cardiac decompensation and heart failure by regulating SR Ca(2+) release via direct phosphorylation of RYR2 Ca(2+) channel on 'Ser-2808'. In the nucleus, phosphorylates the MEF2 repressor HDAC4, promoting its nuclear export and binding to 14-3-3 protein, and expression of MEF2 and genes involved in the hypertrophic program. Is essential for left ventricular remodeling responses to myocardial infarction. In pathological myocardial remodeling acts downstream of the beta adrenergic receptor signaling cascade to regulate key proteins involved in ECC. Regulates Ca(2+) influx to myocytes by binding and phosphorylating the L-type Ca(2+) channel subunit beta-2 CACNB2. In addition to Ca(2+) channels, can target and regulate the cardiac sarcolemmal Na(+) channel Nav1.5/SCN5A and the K+ channel Kv4.3/KCND3, which contribute to arrhythmogenesis in heart failure. Phosphorylates phospholamban (PLN/PLB), an endogenous inhibitor of SERCA2A/ATP2A2, contributing to the enhancement of SR Ca(2+) uptake that may be important in frequency-dependent acceleration of relaxation (FDAR) and maintenance of contractile function during acidosis. May participate in the modulation of skeletal muscle function in response to exercise, by regulating SR Ca(2+) transport through phosphorylation of PLN/PLB and triadin, a ryanodine receptor-coupling factor. In response to interferon-gamma (IFN-gamma) stimulation, catalyzes phosphorylation of STAT1, stimulating the JAK-STAT signaling pathway. In Oryctolagus cuniculus (Rabbit), this protein is Calcium/calmodulin-dependent protein kinase type II subunit delta (CAMK2D).